A 202-amino-acid polypeptide reads, in one-letter code: FMN-dependent NADH:quinone oxidoreductase 2 (202 aa).

Residues S9, S15–S17, M93–F96, and S137–G140 contribute to the FMN site.

The protein belongs to the azoreductase type 1 family. In terms of assembly, homodimer. FMN serves as cofactor.

It catalyses the reaction 2 a quinone + NADH + H(+) = 2 a 1,4-benzosemiquinone + NAD(+). The enzyme catalyses N,N-dimethyl-1,4-phenylenediamine + anthranilate + 2 NAD(+) = 2-(4-dimethylaminophenyl)diazenylbenzoate + 2 NADH + 2 H(+). Quinone reductase that provides resistance to thiol-specific stress caused by electrophilic quinones. Functionally, also exhibits azoreductase activity. Catalyzes the reductive cleavage of the azo bond in aromatic azo compounds to the corresponding amines. In Bradyrhizobium diazoefficiens (strain JCM 10833 / BCRC 13528 / IAM 13628 / NBRC 14792 / USDA 110), this protein is FMN-dependent NADH:quinone oxidoreductase 2.